Reading from the N-terminus, the 287-residue chain is N-acetylmannosamine kinase (287 aa).

ATP is bound by residues 5–12 (AIDIGGTK) and 131–138 (GVGGGIII). Residues H155, C165, C167, and C172 each contribute to the Zn(2+) site.

It belongs to the ROK (NagC/XylR) family. NanK subfamily. In terms of assembly, homodimer.

The enzyme catalyses an N-acyl-D-mannosamine + ATP = an N-acyl-D-mannosamine 6-phosphate + ADP + H(+). It participates in amino-sugar metabolism; N-acetylneuraminate degradation; D-fructose 6-phosphate from N-acetylneuraminate: step 2/5. Its function is as follows. Catalyzes the phosphorylation of N-acetylmannosamine (ManNAc) to ManNAc-6-P. This is N-acetylmannosamine kinase from Vibrio cholerae serotype O1 (strain ATCC 39541 / Classical Ogawa 395 / O395).